The chain runs to 390 residues: ATP-sensitive inward rectifier potassium channel 11 (390 aa).

Topologically, residues 1–65 (MLSRKGIIPE…LQDVFTTLVD (65 aa)) are cytoplasmic. ATP-binding residues include Asn48 and Arg50. A helical membrane pass occupies residues 66 to 92 (LKWPHTLLIFTMSFLCSWLLFAMAWWL). The Extracellular segment spans residues 93–116 (IAFAHGDLAPSEGTAEPCVTSIHS). A disulfide bond links Cys110 and Cys142. The segment at residues 117–133 (FSSAFLFSIEVQVTIGF) is an intramembrane region (discontinuously helical; Pore-forming). Residues Thr130 and Phe133 each coordinate K(+). The short motif at 130 to 135 (TIGFGG) is the Selectivity filter element. The Extracellular segment spans residues 134–142 (GGRMVTEEC). A helical membrane pass occupies residues 143–171 (PLAILILIVQNIVGLMINAIMLGCIFMKT). At 172-390 (AQAHRRAETL…KFSISPDSLS (219 aa)) the chain is on the cytoplasmic side. Arg176 contributes to the a 1,2-diacyl-sn-glycero-3-phospho-(1D-myo-inositol-4,5-bisphosphate) binding site. Residue Tyr330 participates in ATP binding. A Phosphothreonine; by MAPK1 modification is found at Thr341. Phosphoserine; by MAPK1 is present on Ser385.

This sequence belongs to the inward rectifier-type potassium channel (TC 1.A.2.1) family. KCNJ11 subfamily. In terms of assembly, homotetramer; the homotetramer binds four ATP molecules (one ATP per subunit). Forms an heterooctamer with ABCC8/SUR1; one KCNJ11 homotetramer interacts with four ABCC8/SUR1 molecules. Interacts with ABCC9/SUR2. In terms of processing, phosphorylation by MAPK1 results in changes in channel gating that destabilize the closed states and reduce the ATP sensitivity.

Its subcellular location is the membrane. It carries out the reaction K(+)(in) = K(+)(out). Its activity is regulated as follows. KATP channels are regulated by cytoplasmic ATP/ADP ratios; ATP inhibits the channel by closing the pore, while ADP activates the channel. Activated by phosphatidylinositol 4,5-biphosphate (PtdIns(4,5)P2). In terms of biological role, inward rectifier potassium channel that forms the pore of ATP-sensitive potassium channels (KATP), regulating potassium permeability as a function of cytoplasmic ATP and ADP concentrations in many different cells. Inward rectifier potassium channels are characterized by a greater tendency to allow potassium to flow into the cell rather than out of it. Their voltage dependence is regulated by the concentration of extracellular potassium; as external potassium is raised, the voltage range of the channel opening shifts to more positive voltages. The inward rectification is mainly due to the blockage of outward current by internal magnesium. Can be blocked by extracellular barium. In pancreatic cells, it forms KATP channels with ABCC8/SUR1. Can form cardiac and smooth muscle-type KATP channels with ABCC9. The chain is ATP-sensitive inward rectifier potassium channel 11 (KCNJ11) from Homo sapiens (Human).